Consider the following 119-residue polypeptide: Large ribosomal subunit protein bL20c (119 aa).

Belongs to the bacterial ribosomal protein bL20 family.

The protein resides in the plastid. It localises to the chloroplast. In terms of biological role, binds directly to 23S ribosomal RNA and is necessary for the in vitro assembly process of the 50S ribosomal subunit. It is not involved in the protein synthesizing functions of that subunit. In Pinus thunbergii (Japanese black pine), this protein is Large ribosomal subunit protein bL20c (rpl20).